The chain runs to 270 residues: Chymotrypsin-like elastase family member 3A (270 aa).

A signal peptide (or 16) is located at residues 1–15 (MMLRLLSSLLLVAVA). A propeptide spans 16 to 28 (SGYGPPSSHSSSR) (activation peptide). The 240-residue stretch at 29-268 (VVHGEDAVPY…FIDWIEETIA (240 aa)) folds into the Peptidase S1 domain. Cysteines 58 and 74 form a disulfide. His73 (charge relay system) is an active-site residue. Residue Asn114 is glycosylated (N-linked (GlcNAc...) asparagine). Cys117 and Cys120 form a disulfide bridge. Asp123 serves as the catalytic Charge relay system. 3 disulfides stabilise this stretch: Cys157-Cys223, Cys188-Cys204, and Cys213-Cys244. Residue Ser217 is the Charge relay system of the active site.

The protein belongs to the peptidase S1 family. Elastase subfamily.

The enzyme catalyses Preferential cleavage: Ala-|-Xaa. Does not hydrolyze elastin.. In terms of biological role, efficient protease with alanine specificity but only little elastolytic activity. The protein is Chymotrypsin-like elastase family member 3A (CELA3A) of Homo sapiens (Human).